A 31-amino-acid polypeptide reads, in one-letter code: Branched-chain-amino-acid aminotransferase, mitochondrial (31 aa).

The N-terminal 27 residues, 1–27 (MAAAALRQIWARKFLPVPWLLCGPRRY), are a transit peptide targeting the mitochondrion.

This sequence belongs to the class-IV pyridoxal-phosphate-dependent aminotransferase family. As to quaternary structure, homodimer. It depends on pyridoxal 5'-phosphate as a cofactor.

It is found in the mitochondrion. The catalysed reaction is L-leucine + 2-oxoglutarate = 4-methyl-2-oxopentanoate + L-glutamate. It catalyses the reaction L-isoleucine + 2-oxoglutarate = (S)-3-methyl-2-oxopentanoate + L-glutamate. The enzyme catalyses L-valine + 2-oxoglutarate = 3-methyl-2-oxobutanoate + L-glutamate. Catalyzes the first reaction in the catabolism of the essential branched chain amino acids leucine, isoleucine, and valine. May also function as a transporter of branched chain alpha-keto acids. This Sus scrofa (Pig) protein is Branched-chain-amino-acid aminotransferase, mitochondrial (BCAT2).